Reading from the N-terminus, the 689-residue chain is Transcription factor MYC2 (689 aa).

Positions 94 to 172 are JAZ-interaction domain; that stretch reads LQQRLQALID…VLRELNSLIS (79 aa). Residues 316–349 show a composition bias toward polar residues; the sequence is NTVQTNSVPSSNSNKQIAYGNENNHPSGNGQSCY. 2 disordered regions span residues 316 to 361 and 420 to 519; these read NTVQ…PQQQ and QSQF…EAER. Positions 350–361 are enriched in low complexity; that stretch reads NQQQQKNPPQQQ. Residues 471–495 are compositionally biased toward basic and acidic residues; that stretch reads DSEHSDLEASVVKEADSSRVVEPEK. Positions 496-505 are enriched in basic residues; sequence RPRKRGRKPA. Positions 506 to 519 are enriched in basic and acidic residues; that stretch reads NGREEPLNHVEAER. The basic motif; degenerate stretch occupies residues 509 to 522; the sequence is EEPLNHVEAERQRR. Residues 509–558 form the bHLH domain; the sequence is EEPLNHVEAERQRREKLNQRFYALRAVVPNVSKMDKASLLGDAISYINEL. A helix-loop-helix motif region spans residues 523 to 558; the sequence is EKLNQRFYALRAVVPNVSKMDKASLLGDAISYINEL. The interval 563–602 is disordered; it reads QNTESDKEDLKSQIEDLKKESRRPGPPPPPNQDLKMSSHT. A compositionally biased stretch (basic and acidic residues) spans 566–585; it reads ESDKEDLKSQIEDLKKESRR.

Interacts (via N-terminus) with MED25. Interacts (via N-terminus) with JAZ7. MED25 and JAZ7 compete with each other to bind to MYC2. Interacts (via N-terminus) with MTB1. MTB1 and MED25 compete with each other to bind to MYC2. Expressed at low levels in roots, stems, leaves, flowers and fruits.

It localises to the nucleus. Transcriptional activator that binds to the G-box motif (5'-AACGTG-3') found in the promoter of the jasmonate-induced gene LAPA1. Acts as a negative regulator of blue light-mediated photomorphogenesis and positively regulates root growth. Promotes growth in response to the phytohormones abscisic acid (ABA) and jasmonate (JA). Binds to the G-box motif (5'-CACGTG-3') of the RBCS-3A gene promoter. Acts downstream of the jasmonate (JA) receptor to orchestrate JA-mediated activation of plant responses. Positively regulates both wound-responsive and pathogen-responsive genes through MYC2-targeted transcription factors (MTFs) involved in early response to JA. With JA2L forms a transcription module that regulates wounding-responsive genes. With ERF.C3 forms a transcription module that regulates pathogen-responsive genes. Plays a critical role in orchestrating JA-mediated defense gene expression during Botrytis cinerea infection. Negatively regulates defense responses to root-knot nematodes, potentially by mediating crosstalk among the hormones strigolactones, abscisic acid (ABA) and jasmonate (JA). Regulates the termination of JA-mediated defense responses by specifically binding the G-box (5'-CACATG-3') motifs in the promoters of MTB1, MTB2 and MTB3, which are transcription factors that negatively regulates JA signaling. May be involved in JA-induced chilling tolerance, possibly by ameliorating the antioxidant enzyme system of fruit and increasing proline and lycopene levels. This chain is Transcription factor MYC2, found in Solanum lycopersicum (Tomato).